The following is a 209-amino-acid chain: Imidazole glycerol phosphate synthase subunit HisH (209 aa).

The region spanning 3 to 209 (KIAIIDYGMG…SILKNFGEMK (207 aa)) is the Glutamine amidotransferase type-1 domain. The active-site Nucleophile is Cys81. Residues His190 and Glu192 contribute to the active site.

In terms of assembly, heterodimer of HisH and HisF.

Its subcellular location is the cytoplasm. The enzyme catalyses 5-[(5-phospho-1-deoxy-D-ribulos-1-ylimino)methylamino]-1-(5-phospho-beta-D-ribosyl)imidazole-4-carboxamide + L-glutamine = D-erythro-1-(imidazol-4-yl)glycerol 3-phosphate + 5-amino-1-(5-phospho-beta-D-ribosyl)imidazole-4-carboxamide + L-glutamate + H(+). It carries out the reaction L-glutamine + H2O = L-glutamate + NH4(+). It functions in the pathway amino-acid biosynthesis; L-histidine biosynthesis; L-histidine from 5-phospho-alpha-D-ribose 1-diphosphate: step 5/9. IGPS catalyzes the conversion of PRFAR and glutamine to IGP, AICAR and glutamate. The HisH subunit catalyzes the hydrolysis of glutamine to glutamate and ammonia as part of the synthesis of IGP and AICAR. The resulting ammonia molecule is channeled to the active site of HisF. In Geobacter sulfurreducens (strain ATCC 51573 / DSM 12127 / PCA), this protein is Imidazole glycerol phosphate synthase subunit HisH.